The chain runs to 360 residues: GTPase Obg (360 aa).

The Obg domain occupies 1 to 156; the sequence is MFVDSVEIII…KCVRLELKLI (156 aa). In terms of domain architecture, OBG-type G spans 157-360; it reads ADIGLVGFPN…LKFVLLKALP (204 aa). GTP-binding positions include 163-170, 188-192, 210-213, 279-282, and 341-343; these read GFPNAGKS, FTTLV, DIPG, NKCD, and SAV. Mg(2+)-binding residues include Ser170 and Thr190.

The protein belongs to the TRAFAC class OBG-HflX-like GTPase superfamily. OBG GTPase family. Monomer. Mg(2+) is required as a cofactor.

It localises to the cytoplasm. In terms of biological role, an essential GTPase which binds GTP, GDP and possibly (p)ppGpp with moderate affinity, with high nucleotide exchange rates and a fairly low GTP hydrolysis rate. Plays a role in control of the cell cycle, stress response, ribosome biogenesis and in those bacteria that undergo differentiation, in morphogenesis control. The polypeptide is GTPase Obg (Helicobacter pylori (strain G27)).